A 1252-amino-acid polypeptide reads, in one-letter code: Nephrin (1252 aa).

Residues 1-35 (MGAKRVTVRGARTSPIHRMSSLTPLLLMGMLTSGL) form the signal peptide. Topologically, residues 36 to 1078 (AESPVPTSAP…PGPPRLPLLP (1043 aa)) are extracellular. Ig-like C2-type domains are found at residues 39–144 (PVPT…VILS), 149–247 (PKVL…ASFT), 256–347 (PPVI…RSIT), 354–448 (PSAI…KSLT), 454–554 (PAQK…TQLV), and 558–649 (PPTN…ETVS). Residue N54 is glycosylated (N-linked (GlcNAc...) asparagine). Intrachain disulfides connect C67-C125, C174-C231, and C279-C331. A glycan (N-linked (GlcNAc...) asparagine) is linked at N370. C375 and C431 form a disulfide bridge. Residue S446 is modified to Phosphoserine. C479 and C542 are joined by a disulfide. N-linked (GlcNAc...) asparagine glycans are attached at residues N561, N578, N591, and N722. C581 and C637 are disulfide-bonded. Ig-like C2-type domains are found at residues 754–846 (PTIR…LVRL) and 852–953 (PQVD…VSIS). 2 disulfides stabilise this stretch: C775–C830 and C877–C934. The 96-residue stretch at 957–1052 (PPLGLKVVSI…IQVSVTTPGP (96 aa)) folds into the Fibronectin type-III domain. A disordered region spans residues 1043-1067 (IQVSVTTPGPDQAPEDTDHQLPTEL). A helical membrane pass occupies residues 1079–1099 (VLFAVGGLLLLSNASCVGGLL). The Cytoplasmic segment spans residues 1100-1252 (WRRRLRRLAE…LPFELRGHLV (153 aa)). S1112 carries the phosphoserine modification. Residues 1113 to 1127 (EKTEAGSEDRIRNEY) are compositionally biased toward basic and acidic residues. Positions 1113–1144 (EKTEAGSEDRIRNEYEESQWTGDRDTRSSTVS) are disordered. T1115 is modified (phosphothreonine). Phosphoserine is present on S1119. Y1204 is modified (phosphotyrosine; by FYN).

It belongs to the immunoglobulin superfamily. Interacts with NPHS2 and with CD2AP (via C-terminal domain). Self-associates (via the Ig-like domains). Also interacts (via the Ig-like domains) with KIRREL1/NEPH1 and KIRREL2; the interaction with KIRREL1 is dependent on KIRREL1 glycosylation. Interacts with KIRREL3. Interacts with MAGI1 (via PDZ 2 and 3 domains) forming a tripartite complex with IGSF5/JAM4. Interacts with DDN; the interaction is direct. Forms a complex with ACTN4, CASK, IQGAP1, MAGI2, SPTAN1 and SPTBN1. Interacts with phosphatidylinositol 3-kinase regulatory subunit PIK3R1; the interaction is reduced by high glucose levels. Post-translationally, phosphorylated at Tyr-1204 by FYN, leading to the recruitment and activation of phospholipase C-gamma-1/PLCG1. Tyrosine phosphorylation is reduced by high glucose levels. Dephosphorylated by tensin TNS2 which leads to reduced binding of NPHN1 to PIK3R1. In terms of tissue distribution, strongly expressed in the podocytes of kidney glomeruli (at protein level) and at lower levels in the spleen.

It is found in the cell membrane. Its function is as follows. Seems to play a role in the development or function of the kidney glomerular filtration barrier. Regulates glomerular vascular permeability. May anchor the podocyte slit diaphragm to the actin cytoskeleton. Plays a role in skeletal muscle formation through regulation of myoblast fusion. The sequence is that of Nephrin (Nphs1) from Rattus norvegicus (Rat).